The following is a 586-amino-acid chain: Serine/threonine-protein kinase TDA1 (586 aa).

The tract at residues 1–26 (MTTASSSASQLQQRLPEEKPWPQLSG) is disordered. The 313-residue stretch at 39–351 (VTNHNSLGDG…AKNLKQHPFI (313 aa)) folds into the Protein kinase domain. ATP contacts are provided by residues 45 to 53 (LGDGNFSVV) and Lys68. Asp180 acts as the Proton acceptor in catalysis. Residues 503–524 (TTPESRSNFNTPKTLSRQGSST) are disordered. Thr504 carries the post-translational modification Phosphothreonine. Phosphoserine occurs at positions 509 and 518. Thr538 carries the phosphothreonine modification. The residue at position 578 (Ser578) is a Phosphoserine.

Belongs to the protein kinase superfamily. Ser/Thr protein kinase family. In terms of assembly, interacts with RIM11.

The protein localises to the cytoplasm. It is found in the nucleus. The enzyme catalyses L-seryl-[protein] + ATP = O-phospho-L-seryl-[protein] + ADP + H(+). It carries out the reaction L-threonyl-[protein] + ATP = O-phospho-L-threonyl-[protein] + ADP + H(+). In terms of biological role, serine/threonine protein kinase shown to have protein phosphorylation activity in vitro. The chain is Serine/threonine-protein kinase TDA1 (TDA1) from Saccharomyces cerevisiae (strain ATCC 204508 / S288c) (Baker's yeast).